A 344-amino-acid chain; its full sequence is Protein L-Myc-1-A (344 aa).

2 disordered regions span residues 100–162 (RLTT…DDEI) and 209–261 (PPEP…EDIV). Composition is skewed to polar residues over residues 102 to 112 (TTASPRATNPQ), 123 to 133 (PGVNSIEQNAN), and 236 to 255 (PALQ…SGSS). Residues 261 to 313 (VKKKNHNYLERKRRNDLRSRFLALREEVPSLTRSTKTPKVVVLSKATEFLKGL) enclose the bHLH domain. Positions 313-341 (LVIQEQQLTAEKFKLWSRHQQLLRRISHL) are leucine-zipper.

Efficient DNA binding requires dimerization with another bHLH protein. Binds DNA as a heterodimer with MAX. In terms of tissue distribution, high levels in oocytes, modest levels in kidney and low levels in spleen.

The protein localises to the nucleus. This Xenopus laevis (African clawed frog) protein is Protein L-Myc-1-A (mycl1-a).